Here is a 243-residue protein sequence, read N- to C-terminus: tRNA pseudouridine synthase A (243 aa).

The active-site Nucleophile is the Asp54. Tyr112 provides a ligand contact to substrate.

Belongs to the tRNA pseudouridine synthase TruA family. In terms of assembly, homodimer.

It carries out the reaction uridine(38/39/40) in tRNA = pseudouridine(38/39/40) in tRNA. Functionally, formation of pseudouridine at positions 38, 39 and 40 in the anticodon stem and loop of transfer RNAs. This chain is tRNA pseudouridine synthase A, found in Onion yellows phytoplasma (strain OY-M).